We begin with the raw amino-acid sequence, 487 residues long: Melanopsin (487 aa).

The disordered stretch occupies residues 1-37 (MNPPSGPRTQEPSCVATPASPSRWDGYRSSTSSLDQP). Topologically, residues 1–67 (MNPPSGPRTQ…VDVPDHAHYT (67 aa)) are extracellular. The chain crosses the membrane as a helical span at residues 68–88 (LGTVILLVGLTGILGNLMVIY). Over 89–102 (TFCRSRGLRTPANM) the chain is Cytoplasmic. Residues 103–123 (FIINLAVSDFFMSFTQAPVFF) traverse the membrane as a helical segment. At 124 to 139 (ASSLHKRWLFGEAGCE) the chain is on the extracellular side. Residues Cys138 and Cys216 are joined by a disulfide bond. The chain crosses the membrane as a helical span at residues 140–160 (FYAFCGALFGITSMITLMAIA). At 161–183 (LDRYLVITHPLATIGVVSKRRAA) the chain is on the cytoplasmic side. Residues 184 to 204 (LVLLGVWLYALAWSLPPFFGW) form a helical membrane-spanning segment. Residues 205–233 (SAYVPEGLLTSCSWDYMSFTPSVRAYTML) are Extracellular-facing. The helical transmembrane segment at 234–254 (LFCFVFFLPLLVIVYCYIFIF) threads the bilayer. The Cytoplasmic portion of the chain corresponds to 255 to 291 (RAIRETGQALQTFRACEGGGRSPRQRQRLQREWKMAK). A helical membrane pass occupies residues 292-312 (IELLVILLFVLSWAPYSIVAL). Topologically, residues 313–327 (MAFAGYAHVLTPYMN) are extracellular. The helical transmembrane segment at 328–348 (SVPAVIAKASAIHNPIIYAIT) threads the bilayer. Lys335 is modified (N6-(retinylidene)lysine). At 349–487 (HPKYRMAIAQ…LPLHPGWAFH (139 aa)) the chain is on the cytoplasmic side. Residues 436–459 (CSQGLEDREAKAPVRPQGREAETP) are disordered. A compositionally biased stretch (basic and acidic residues) spans 440 to 457 (LEDREAKAPVRPQGREAE).

This sequence belongs to the G-protein coupled receptor 1 family. Opsin subfamily. As to expression, eye. Expression is restricted within the ganglion cell layer.

Its subcellular location is the cell membrane. It localises to the cell projection. The protein resides in the axon. It is found in the dendrite. The protein localises to the perikaryon. Its function is as follows. Photoreceptor that binds cis-retinaldehydes. Contributes to pupillar reflex, photoentrainment and other non-image forming responses to light. May be involved in the optokinetic visual tracking response. May be involved in the regulation of retinal hyaloid vessel growth and regression. This Felis catus (Cat) protein is Melanopsin (OPN4).